Reading from the N-terminus, the 232-residue chain is Phosphatidylserine decarboxylase proenzyme (232 aa).

The Schiff-base intermediate with substrate; via pyruvic acid role is filled by Ser-190. Position 190 is a pyruvic acid (Ser); by autocatalysis (Ser-190).

It belongs to the phosphatidylserine decarboxylase family. PSD-A subfamily. As to quaternary structure, heterodimer of a large membrane-associated beta subunit and a small pyruvoyl-containing alpha subunit. Pyruvate serves as cofactor. In terms of processing, is synthesized initially as an inactive proenzyme. Formation of the active enzyme involves a self-maturation process in which the active site pyruvoyl group is generated from an internal serine residue via an autocatalytic post-translational modification. Two non-identical subunits are generated from the proenzyme in this reaction, and the pyruvate is formed at the N-terminus of the alpha chain, which is derived from the carboxyl end of the proenzyme. The post-translation cleavage follows an unusual pathway, termed non-hydrolytic serinolysis, in which the side chain hydroxyl group of the serine supplies its oxygen atom to form the C-terminus of the beta chain, while the remainder of the serine residue undergoes an oxidative deamination to produce ammonia and the pyruvoyl prosthetic group on the alpha chain.

It is found in the cell membrane. The enzyme catalyses a 1,2-diacyl-sn-glycero-3-phospho-L-serine + H(+) = a 1,2-diacyl-sn-glycero-3-phosphoethanolamine + CO2. The protein operates within phospholipid metabolism; phosphatidylethanolamine biosynthesis; phosphatidylethanolamine from CDP-diacylglycerol: step 2/2. Catalyzes the formation of phosphatidylethanolamine (PtdEtn) from phosphatidylserine (PtdSer). This Bradyrhizobium sp. (strain ORS 278) protein is Phosphatidylserine decarboxylase proenzyme.